The following is a 158-amino-acid chain: Dysbindin domain-containing protein 1 (158 aa).

The segment at 1 to 38 (MEPSEGASPGGLVKEVDMPQAALSAPVPVTGTSGQSPM) is disordered. Residues Ser-95 and Ser-119 each carry the phosphoserine modification. The interval 96–158 (DDENVASDSH…ILTVERPKED (63 aa)) is disordered. The span at 125–141 (TRAEQNREKQPFGDPER) shows a compositional bias: basic and acidic residues.

It belongs to the dysbindin family.

The sequence is that of Dysbindin domain-containing protein 1 (DBNDD1) from Bos taurus (Bovine).